The primary structure comprises 357 residues: Histidine biosynthesis bifunctional protein HisB (357 aa).

Residues 1–168 (MTPILFIDRD…GIAHALADAP (168 aa)) form a histidinol-phosphatase region. The active-site Nucleophile is the Asp-8. 3 residues coordinate Mg(2+): Asp-8, Asp-10, and Asp-128. Asp-10 serves as the catalytic Proton donor. The segment at 169-357 (RTAVVQRDTK…TALPSTKGAL (189 aa)) is imidazoleglycerol-phosphate dehydratase.

This sequence in the N-terminal section; belongs to the histidinol-phosphatase family. It in the C-terminal section; belongs to the imidazoleglycerol-phosphate dehydratase family. Requires Mg(2+) as cofactor.

The protein localises to the cytoplasm. It catalyses the reaction D-erythro-1-(imidazol-4-yl)glycerol 3-phosphate = 3-(imidazol-4-yl)-2-oxopropyl phosphate + H2O. It carries out the reaction L-histidinol phosphate + H2O = L-histidinol + phosphate. It participates in amino-acid biosynthesis; L-histidine biosynthesis; L-histidine from 5-phospho-alpha-D-ribose 1-diphosphate: step 6/9. The protein operates within amino-acid biosynthesis; L-histidine biosynthesis; L-histidine from 5-phospho-alpha-D-ribose 1-diphosphate: step 8/9. The sequence is that of Histidine biosynthesis bifunctional protein HisB from Stenotrophomonas maltophilia (strain K279a).